The primary structure comprises 498 residues: Tumor necrosis factor receptor superfamily member 8 (498 aa).

The first 18 residues, 1–18 (MSALLTAAGLLFLGMLQA), serve as a signal peptide directing secretion. Over 19 to 287 (FPTDRPLKTT…STGTPFLDPG (269 aa)) the chain is Extracellular. TNFR-Cys repeat units lie at residues 68 to 105 (QCAP…PRIC) and 106 to 146 (ECQP…DTIC). Cystine bridges form between Cys69–Cys81, Cys84–Cys97, Cys87–Cys105, Cys107–Cys121, and Cys128–Cys146. Residues 142-168 (KDTICELPSSGSGPNCSNPGDRKTLTS) form a disordered region. Over residues 149–160 (PSSGSGPNCSNP) the composition is skewed to low complexity. 3 N-linked (GlcNAc...) asparagine glycosylation sites follow: Asn156, Asn183, and Asn229. The disordered stretch occupies residues 204-256 (ELVKVPESSSSKAREPSPDPGNAEKNMTLELPSPGTLPDISTSENSKEPASTA). Polar residues predominate over residues 242–256 (DISTSENSKEPASTA). A helical membrane pass occupies residues 288–308 (PVLFWVAMVVLLVGSGSFLLC). The Cytoplasmic segment spans residues 309–498 (YWKACRRRFQ…DHGPTTVSEK (190 aa)). A compositionally biased stretch (polar residues) spans 338–358 (DSCPTEKLTQPQRSGSVTDPS). Disordered regions lie at residues 338–370 (DSCP…SPPP), 389–411 (LDDS…VSTE), and 436–498 (EVPE…VSEK). Residues Ser339 and Ser353 each carry the phosphoserine modification. 3 stretches are compositionally biased toward basic and acidic residues: residues 402-411 (EPPEPRVSTE), 456-465 (EVDHAPHYPE), and 484-498 (EGGK…VSEK).

Belongs to the TNFR8 family. As to quaternary structure, interacts with TRAF1, TRAF2, TRAF3 and TRAF5. Detected in thymus and in activated splenocytes.

The protein resides in the cell membrane. In terms of biological role, receptor for TNFSF8/CD30L. May play a role in the regulation of cellular growth and transformation of activated lymphoblasts. Regulates gene expression through activation of NF-kappa-B. The chain is Tumor necrosis factor receptor superfamily member 8 from Mus musculus (Mouse).